Here is a 223-residue protein sequence, read N- to C-terminus: MNSSLQRLEKKIGYQFKDESFLKLALTHRSANGTHNERLEFLGDSILSFVVADDLYHRFPKVDEGDMSRMRATLVRGHTLAELGREFQLGDYLYLGPGELKSGGFRRDSILADAVEAIIGAIYLDSDTETVRGIILSWYNTRLESIEPGVSQKDPKTRLQEYLQGRRKPLPTYTVTKIKGEAHNQEFTIECIVAGLDKPVIGKGSSRRKAEQSAADIALGQLN.

In terms of domain architecture, RNase III spans 5 to 127 (LQRLEKKIGY…IIGAIYLDSD (123 aa)). Mg(2+) is bound at residue glutamate 40. Aspartate 44 is an active-site residue. Mg(2+)-binding residues include aspartate 113 and glutamate 116. Glutamate 116 is a catalytic residue. The DRBM domain maps to 154-223 (DPKTRLQEYL…AADIALGQLN (70 aa)).

The protein belongs to the ribonuclease III family. As to quaternary structure, homodimer. Mg(2+) is required as a cofactor.

The protein resides in the cytoplasm. It catalyses the reaction Endonucleolytic cleavage to 5'-phosphomonoester.. Digests double-stranded RNA. Involved in the processing of primary rRNA transcript to yield the immediate precursors to the large and small rRNAs (23S and 16S). Processes some mRNAs, and tRNAs when they are encoded in the rRNA operon. Processes pre-crRNA and tracrRNA of type II CRISPR loci if present in the organism. In Aliivibrio fischeri (strain ATCC 700601 / ES114) (Vibrio fischeri), this protein is Ribonuclease 3.